The chain runs to 300 residues: Beta-lactamase (300 aa).

A signal peptide spans 1–29 (MTMFKTTFRQTATIAVSLISLLVSPMLWA). Catalysis depends on Ser75, which acts as the Acyl-ester intermediate. 239-241 (KTG) contributes to the substrate binding site.

Belongs to the class-A beta-lactamase family. As to quaternary structure, monomer.

It carries out the reaction a beta-lactam + H2O = a substituted beta-amino acid. Functionally, hydrolyzes broad-spectrum beta-lactam antibiotics. Active against cephalosporins such as cefuroxime and cefotaxime. This chain is Beta-lactamase (blaB), found in Proteus vulgaris.